The primary structure comprises 253 residues: Imidazole glycerol phosphate synthase subunit HisF (253 aa).

Catalysis depends on residues aspartate 11 and aspartate 130.

It belongs to the HisA/HisF family. Heterodimer of HisH and HisF.

It is found in the cytoplasm. It carries out the reaction 5-[(5-phospho-1-deoxy-D-ribulos-1-ylimino)methylamino]-1-(5-phospho-beta-D-ribosyl)imidazole-4-carboxamide + L-glutamine = D-erythro-1-(imidazol-4-yl)glycerol 3-phosphate + 5-amino-1-(5-phospho-beta-D-ribosyl)imidazole-4-carboxamide + L-glutamate + H(+). Its pathway is amino-acid biosynthesis; L-histidine biosynthesis; L-histidine from 5-phospho-alpha-D-ribose 1-diphosphate: step 5/9. In terms of biological role, IGPS catalyzes the conversion of PRFAR and glutamine to IGP, AICAR and glutamate. The HisF subunit catalyzes the cyclization activity that produces IGP and AICAR from PRFAR using the ammonia provided by the HisH subunit. The protein is Imidazole glycerol phosphate synthase subunit HisF of Clostridium botulinum (strain Kyoto / Type A2).